The chain runs to 436 residues: Glutamyl-tRNA(Gln) amidotransferase subunit D (436 aa).

The Asparaginase/glutaminase domain maps to 91–420 (QNISIISTGG…GEVAKLMNKN (330 aa)). Residues Thr-101, Thr-177, Asp-178, and Lys-254 contribute to the active site.

It belongs to the asparaginase 1 family. GatD subfamily. In terms of assembly, heterodimer of GatD and GatE.

It carries out the reaction L-glutamyl-tRNA(Gln) + L-glutamine + ATP + H2O = L-glutaminyl-tRNA(Gln) + L-glutamate + ADP + phosphate + H(+). In terms of biological role, allows the formation of correctly charged Gln-tRNA(Gln) through the transamidation of misacylated Glu-tRNA(Gln) in organisms which lack glutaminyl-tRNA synthetase. The reaction takes place in the presence of glutamine and ATP through an activated gamma-phospho-Glu-tRNA(Gln). The GatDE system is specific for glutamate and does not act on aspartate. In Methanobrevibacter smithii (strain ATCC 35061 / DSM 861 / OCM 144 / PS), this protein is Glutamyl-tRNA(Gln) amidotransferase subunit D.